Reading from the N-terminus, the 352-residue chain is MSASTTATTRHDWSLAEVKALFQLPFNDLLFQAQTVHRAHFDPNRVQVSTLLSIKTGACPEDCKYCPQSGHYNTGLEKQKLMEVQKVLEEAARAKAIGSTRFCMGAAWKHPSAKDMPYVLEMVKGVKAMGLETCMTLGKLDQDQTQALAQAGLDYYNHNLDTSPEFYGSIITTRTYSERLQTLAYVRDAGMKICSGGILGMGESLDDRAGLLIQLANLPEHPESVPINMLVKVAGTPLAEEEDVDPFDFIRMLAVARLLMPKSHVRLSAGREQMNEQMQALAFMAGANSIFYGEKLLTTANPQADKDMQLFARLGIKPEAREEHADEVHQAAIEQALVEQRSSELFYNAASA.

One can recognise a Radical SAM core domain in the interval 44-262; the sequence is NRVQVSTLLS…LAVARLLMPK (219 aa). Residues cysteine 59, cysteine 63, and cysteine 66 each coordinate [4Fe-4S] cluster. Residues cysteine 103, cysteine 134, cysteine 194, and arginine 266 each coordinate [2Fe-2S] cluster.

The protein belongs to the radical SAM superfamily. Biotin synthase family. As to quaternary structure, homodimer. [4Fe-4S] cluster serves as cofactor. The cofactor is [2Fe-2S] cluster.

It carries out the reaction (4R,5S)-dethiobiotin + (sulfur carrier)-SH + 2 reduced [2Fe-2S]-[ferredoxin] + 2 S-adenosyl-L-methionine = (sulfur carrier)-H + biotin + 2 5'-deoxyadenosine + 2 L-methionine + 2 oxidized [2Fe-2S]-[ferredoxin]. The protein operates within cofactor biosynthesis; biotin biosynthesis; biotin from 7,8-diaminononanoate: step 2/2. Its function is as follows. Catalyzes the conversion of dethiobiotin (DTB) to biotin by the insertion of a sulfur atom into dethiobiotin via a radical-based mechanism. This is Biotin synthase from Pseudomonas putida (strain W619).